A 577-amino-acid chain; its full sequence is Chaperonin CPN60-1, mitochondrial (577 aa).

The N-terminal 34 residues, 1 to 34, are a transit peptide targeting the mitochondrion; sequence MYRAAASLASKARQAGNSLATRQVGSRLAWSRNY.

This sequence belongs to the chaperonin (HSP60) family.

Its subcellular location is the mitochondrion. Its function is as follows. Implicated in mitochondrial protein import and macromolecular assembly. May facilitate the correct folding of imported proteins. May also prevent misfolding and promote the refolding and proper assembly of unfolded polypeptides generated under stress conditions in the mitochondrial matrix. The sequence is that of Chaperonin CPN60-1, mitochondrial (CPN60I) from Zea mays (Maize).